A 242-amino-acid polypeptide reads, in one-letter code: Pyridoxine 5'-phosphate synthase (242 aa).

Asn7 is a 3-amino-2-oxopropyl phosphate binding site. 9–10 serves as a coordination point for 1-deoxy-D-xylulose 5-phosphate; that stretch reads DH. Arg18 contributes to the 3-amino-2-oxopropyl phosphate binding site. Catalysis depends on His44, which acts as the Proton acceptor. Positions 46 and 51 each coordinate 1-deoxy-D-xylulose 5-phosphate. Glu71 (proton acceptor) is an active-site residue. Thr101 contributes to the 1-deoxy-D-xylulose 5-phosphate binding site. The active-site Proton donor is the His192. 3-amino-2-oxopropyl phosphate contacts are provided by residues Gly193 and 214-215; that span reads GH.

It belongs to the PNP synthase family. As to quaternary structure, homooctamer; tetramer of dimers.

It is found in the cytoplasm. The catalysed reaction is 3-amino-2-oxopropyl phosphate + 1-deoxy-D-xylulose 5-phosphate = pyridoxine 5'-phosphate + phosphate + 2 H2O + H(+). The protein operates within cofactor biosynthesis; pyridoxine 5'-phosphate biosynthesis; pyridoxine 5'-phosphate from D-erythrose 4-phosphate: step 5/5. In terms of biological role, catalyzes the complicated ring closure reaction between the two acyclic compounds 1-deoxy-D-xylulose-5-phosphate (DXP) and 3-amino-2-oxopropyl phosphate (1-amino-acetone-3-phosphate or AAP) to form pyridoxine 5'-phosphate (PNP) and inorganic phosphate. The chain is Pyridoxine 5'-phosphate synthase from Synechocystis sp. (strain ATCC 27184 / PCC 6803 / Kazusa).